The primary structure comprises 389 residues: tRNA N(3)-cytidine methyltransferase METTL2 (389 aa).

The disordered stretch occupies residues 1-20; the sequence is MAASFPEGVPETEDGKRPQF. Residues Trp-78, Tyr-82, Gly-181, Asp-206, Asp-232, Leu-233, and Ile-253 each contribute to the S-adenosyl-L-methionine site.

This sequence belongs to the methyltransferase superfamily. METL family. As to quaternary structure, monomer. Interacts with DALRD3.

The protein localises to the cytoplasm. It carries out the reaction cytidine(32) in tRNA(Thr) + S-adenosyl-L-methionine = N(3)-methylcytidine(32) in tRNA(Thr) + S-adenosyl-L-homocysteine + H(+). The catalysed reaction is cytidine(32) in tRNA(Arg)(CCU) + S-adenosyl-L-methionine = N(3)-methylcytidine(32) in tRNA(Arg)(CCU) + S-adenosyl-L-homocysteine + H(+). In terms of biological role, S-adenosyl-L-methionine-dependent methyltransferase that mediates N(3)-methylcytidine modification of residue 32 of the tRNA anticodon loop of tRNA(Thr)(UGU) and tRNA(Arg)(CCU). N(3)-methylcytidine methylation by METTL2 requires the N6-threonylcarbamoylation of tRNA (t6A37) by the EKC/KEOPS complex as prerequisite. In Mus musculus (Mouse), this protein is tRNA N(3)-cytidine methyltransferase METTL2.